Here is a 314-residue protein sequence, read N- to C-terminus: Acetylglutamate kinase (314 aa).

Substrate is bound by residues 76 to 77 (GG), R98, and N199.

The protein belongs to the acetylglutamate kinase family. ArgB subfamily.

Its subcellular location is the cytoplasm. The enzyme catalyses N-acetyl-L-glutamate + ATP = N-acetyl-L-glutamyl 5-phosphate + ADP. It participates in amino-acid biosynthesis; L-arginine biosynthesis; N(2)-acetyl-L-ornithine from L-glutamate: step 2/4. Its function is as follows. Catalyzes the ATP-dependent phosphorylation of N-acetyl-L-glutamate. The chain is Acetylglutamate kinase from Bifidobacterium longum (strain DJO10A).